The primary structure comprises 531 residues: CCA tRNA nucleotidyltransferase, mitochondrial (531 aa).

Belongs to the tRNA nucleotidyltransferase/poly(A) polymerase family.

The protein resides in the mitochondrion. Its subcellular location is the cytoplasm. It is found in the nucleus. The catalysed reaction is a tRNA precursor + 2 CTP + ATP = a tRNA with a 3' CCA end + 3 diphosphate. Nucleotidyltransferase that catalyzes the addition and repair of the essential 3'-terminal CCA sequence in tRNAs, which is necessary for the attachment of amino acids to the 3' terminus of tRNA molecules, using CTP and ATP as substrates. tRNA 3'-terminal CCA addition is required both for tRNA processing and repair. Also involved in tRNA surveillance by mediating tandem CCA addition to generate a CCACCA at the 3' terminus of unstable tRNAs. While stable tRNAs receive only 3'-terminal CCA, unstable tRNAs are marked with CCACCA and rapidly degraded. The structural flexibility of RNA controls the choice between CCA versus CCACCA addition: following the first CCA addition cycle, nucleotide-binding to the active site triggers a clockwise screw motion, producing torque on the RNA. This ejects stable RNAs, whereas unstable RNAs are refolded while bound to the enzyme and subjected to a second CCA catalytic cycle. The chain is CCA tRNA nucleotidyltransferase, mitochondrial (CCA1) from Candida glabrata (strain ATCC 2001 / BCRC 20586 / JCM 3761 / NBRC 0622 / NRRL Y-65 / CBS 138) (Yeast).